A 154-amino-acid polypeptide reads, in one-letter code: Nucleoside diphosphate kinase A1 (154 aa).

ATP contacts are provided by Lys-13, Phe-61, Arg-89, Thr-95, Arg-106, and Asn-116. Catalysis depends on His-119, which acts as the Pros-phosphohistidine intermediate.

The protein belongs to the NDK family. The cofactor is Mg(2+).

It is found in the cytoplasm. It carries out the reaction a 2'-deoxyribonucleoside 5'-diphosphate + ATP = a 2'-deoxyribonucleoside 5'-triphosphate + ADP. The catalysed reaction is a ribonucleoside 5'-diphosphate + ATP = a ribonucleoside 5'-triphosphate + ADP. Major role in the synthesis of nucleoside triphosphates other than ATP. The ATP gamma phosphate is transferred to the NDP beta phosphate via a ping-pong mechanism, using a phosphorylated active-site intermediate. This Xenopus laevis (African clawed frog) protein is Nucleoside diphosphate kinase A1.